The chain runs to 491 residues: MPGARDALCHQALQLLAELCARGALEHDSCQDFIYHLRDRARPRLRDPDISVSLLTLVVTACGLALFGVSLFVSWKLCWVPWRERGLPSGSKDNNQEPLNYMDTETNEQENSEDFLDPPTPCPDSSMKISHTSPDIPLSTQTGIQENCAHGVRVQRQVTEPTSSARHNSIRRQLNLSNPDFNIQQLQKQEQLTGIGRIKPELYKQRSLDNDDGRRSNSKACGKLNFILKYDCDLEQLIVKIHKAVNLPAKDFSGTSDPYVKIYLLPDRKTKHQTKVHRKTLNPVFDEVFLFPVPYNDLEARKLHFSVYDFDRFSRHDLIGQVVVDHFLDLADFPRECILWKDIEYVTNDNVDLGELMFSLCYLPTAGRLTITIIKARNLKAMDITGASDPYVKVSLMCDGRRLKKRKTSTKRNTLNPVYNEAIVFDVPPENIDQIHLSIAVMDYDRVGHNEIIGVCQVGNEAERLGRDHWSEMLSYPRKPIAHWHSLVEKR.

At 1–52 (MPGARDALCHQALQLLAELCARGALEHDSCQDFIYHLRDRARPRLRDPDISV) the chain is on the vesicular side. Residues 9–31 (CHQALQLLAELCARGALEHDSCQ) form a cysteine motif region. Residues 53–73 (SLLTLVVTACGLALFGVSLFV) traverse the membrane as a helical segment. At 74 to 491 (SWKLCWVPWR…AHWHSLVEKR (418 aa)) the chain is on the cytoplasmic side. Ser-177 carries the post-translational modification Phosphoserine. C2 domains follow at residues 220–341 (ACGK…ILWK) and 352–485 (DLGE…AHWH). Residues Asp-251, Asp-257, Asp-309, Phe-310, Asp-311, Ser-314, Asp-317, Asp-383, Asp-389, Asp-443, and Asp-445 each coordinate Ca(2+).

The protein belongs to the synaptotagmin family. As to quaternary structure, homodimer; disulfide-linked via the cysteine motif. Can also form heterodimers with SYT3, SYT6, SYT7 and SYT10. It depends on Ca(2+) as a cofactor.

It localises to the cytoplasmic vesicle. Its subcellular location is the secretory vesicle. The protein localises to the synaptic vesicle membrane. Its function is as follows. May be involved in Ca(2+)-dependent exocytosis of secretory vesicles through Ca(2+) and phospholipid binding to the C2 domain or may serve as Ca(2+) sensors in the process of vesicular trafficking and exocytosis. The chain is Synaptotagmin-9 (SYT9) from Homo sapiens (Human).